Reading from the N-terminus, the 156-residue chain is 6,7-dimethyl-8-ribityllumazine synthase (156 aa).

5-amino-6-(D-ribitylamino)uracil contacts are provided by residues Phe23, 57–59 (AFE), and 81–83 (AVI). 86–87 (ST) is a binding site for (2S)-2-hydroxy-3-oxobutyl phosphate. The active-site Proton donor is His89. Phe114 is a binding site for 5-amino-6-(D-ribitylamino)uracil. (2S)-2-hydroxy-3-oxobutyl phosphate is bound at residue Arg128.

It belongs to the DMRL synthase family.

The catalysed reaction is (2S)-2-hydroxy-3-oxobutyl phosphate + 5-amino-6-(D-ribitylamino)uracil = 6,7-dimethyl-8-(1-D-ribityl)lumazine + phosphate + 2 H2O + H(+). It participates in cofactor biosynthesis; riboflavin biosynthesis; riboflavin from 2-hydroxy-3-oxobutyl phosphate and 5-amino-6-(D-ribitylamino)uracil: step 1/2. Catalyzes the formation of 6,7-dimethyl-8-ribityllumazine by condensation of 5-amino-6-(D-ribitylamino)uracil with 3,4-dihydroxy-2-butanone 4-phosphate. This is the penultimate step in the biosynthesis of riboflavin. The polypeptide is 6,7-dimethyl-8-ribityllumazine synthase (Campylobacter lari (strain RM2100 / D67 / ATCC BAA-1060)).